Consider the following 511-residue polypeptide: Cobyric acid synthase (511 aa).

The region spanning 251–443 (LLDIAIICLP…IHGIFDNDVF (193 aa)) is the GATase cobBQ-type domain. Residue Cys-332 is the Nucleophile of the active site. His-435 is an active-site residue.

It belongs to the CobB/CobQ family. CobQ subfamily.

Its pathway is cofactor biosynthesis; adenosylcobalamin biosynthesis. In terms of biological role, catalyzes amidations at positions B, D, E, and G on adenosylcobyrinic A,C-diamide. NH(2) groups are provided by glutamine, and one molecule of ATP is hydrogenolyzed for each amidation. In Listeria monocytogenes serotype 4b (strain CLIP80459), this protein is Cobyric acid synthase.